We begin with the raw amino-acid sequence, 891 residues long: Alanine--tRNA ligase (891 aa).

Zn(2+) is bound by residues histidine 564, histidine 568, cysteine 678, and histidine 682.

Belongs to the class-II aminoacyl-tRNA synthetase family. Requires Zn(2+) as cofactor.

Its subcellular location is the cytoplasm. It catalyses the reaction tRNA(Ala) + L-alanine + ATP = L-alanyl-tRNA(Ala) + AMP + diphosphate. Its function is as follows. Catalyzes the attachment of alanine to tRNA(Ala) in a two-step reaction: alanine is first activated by ATP to form Ala-AMP and then transferred to the acceptor end of tRNA(Ala). Also edits incorrectly charged Ser-tRNA(Ala) and Gly-tRNA(Ala) via its editing domain. The protein is Alanine--tRNA ligase of Nitrobacter winogradskyi (strain ATCC 25391 / DSM 10237 / CIP 104748 / NCIMB 11846 / Nb-255).